A 329-amino-acid polypeptide reads, in one-letter code: Malate dehydrogenase (329 aa).

12–18 (GAAGQIG) is an NAD(+) binding site. Residues arginine 93 and arginine 99 each contribute to the substrate site. Residues asparagine 106, glutamine 113, and 130–132 (TGN) each bind NAD(+). Substrate-binding residues include asparagine 132 and arginine 163. Histidine 188 (proton acceptor) is an active-site residue.

Belongs to the LDH/MDH superfamily. MDH type 2 family.

The catalysed reaction is (S)-malate + NAD(+) = oxaloacetate + NADH + H(+). In terms of biological role, catalyzes the reversible oxidation of malate to oxaloacetate. The chain is Malate dehydrogenase from Mycobacterium ulcerans (strain Agy99).